We begin with the raw amino-acid sequence, 157 residues long: MQLTVKALQGRECSLQVAEDELVSTLKHLVSDKLNVPVRQQRLLFKGKALADEKRLSDYNIGPNSKLNLVVKPLEKVLLEEGSAHRLVDSPATPIWQLISKVLARHFSVADASRVLEQLQRDYDRSLSRLTLDDIERLASRFLHPEVTEAMEKGFCK.

One can recognise a Ubiquitin-like domain in the interval 1 to 76 (MQLTVKALQG…LNLVVKPLEK (76 aa)). Lysine 48 is covalently cross-linked (Glycyl lysine isopeptide (Lys-Gly) (interchain with G-Cter in ubiquitin)). A Phosphoserine modification is found at serine 90. The tract at residues 96–138 (WQLISKVLARHFSVADASRVLEQLQRDYDRSLSRLTLDDIERL) is required and sufficient for interaction with BAG6.

As to quaternary structure, component of the BAG6/BAT3 complex, at least composed of BAG6, UBL4A and GET4/TRC35. Interacts with BAG6; the interaction is direct and required for UBL4A protein stability. Interacts with USP13; may be indirect via BAG6. Polyubiquitinated. Ubiquitination by AMFR and deubiquitination by USP13 may regulate the interaction between the BAG6/BAT3 complex and SGTA and therefore may regulate client proteins fate.

Its subcellular location is the cytoplasm. It localises to the cytosol. It is found in the nucleus. Its function is as follows. As part of a cytosolic protein quality control complex, the BAG6/BAT3 complex, maintains misfolded and hydrophobic patches-containing proteins in a soluble state and participates in their proper delivery to the endoplasmic reticulum or alternatively can promote their sorting to the proteasome where they undergo degradation. The BAG6/BAT3 complex is involved in the post-translational delivery of tail-anchored/type II transmembrane proteins to the endoplasmic reticulum membrane. Recruited to ribosomes, it interacts with the transmembrane region of newly synthesized tail-anchored proteins and together with SGTA and ASNA1 mediates their delivery to the endoplasmic reticulum. Client proteins that cannot be properly delivered to the endoplasmic reticulum are ubiquitinated and sorted to the proteasome. Similarly, the BAG6/BAT3 complex also functions as a sorting platform for proteins of the secretory pathway that are mislocalized to the cytosol either delivering them to the proteasome for degradation or to the endoplasmic reticulum. The BAG6/BAT3 complex also plays a role in the endoplasmic reticulum-associated degradation (ERAD), a quality control mechanism that eliminates unwanted proteins of the endoplasmic reticulum through their retrotranslocation to the cytosol and their targeting to the proteasome. It maintains these retrotranslocated proteins in an unfolded yet soluble state condition in the cytosol to ensure their proper delivery to the proteasome. This Mus musculus (Mouse) protein is Ubiquitin-like protein 4A.